The sequence spans 151 residues: Urease accessory protein UreE (151 aa).

The protein belongs to the UreE family.

The protein localises to the cytoplasm. In terms of biological role, involved in urease metallocenter assembly. Binds nickel. Probably functions as a nickel donor during metallocenter assembly. The protein is Urease accessory protein UreE of Bacillus cereus (strain ATCC 10987 / NRS 248).